Reading from the N-terminus, the 398-residue chain is 1-deoxy-D-xylulose 5-phosphate reductoisomerase (398 aa).

NADPH contacts are provided by T11, G12, S13, I14, and N125. K126 lines the 1-deoxy-D-xylulose 5-phosphate pocket. An NADPH-binding site is contributed by E127. Position 151 (D151) interacts with Mn(2+). Residues S152, E153, S186, and H209 each coordinate 1-deoxy-D-xylulose 5-phosphate. E153 provides a ligand contact to Mn(2+). G215 provides a ligand contact to NADPH. 1-deoxy-D-xylulose 5-phosphate-binding residues include S222, N227, K228, and E231. Residue E231 participates in Mn(2+) binding.

Belongs to the DXR family. Requires Mg(2+) as cofactor. Mn(2+) is required as a cofactor.

The enzyme catalyses 2-C-methyl-D-erythritol 4-phosphate + NADP(+) = 1-deoxy-D-xylulose 5-phosphate + NADPH + H(+). Its pathway is isoprenoid biosynthesis; isopentenyl diphosphate biosynthesis via DXP pathway; isopentenyl diphosphate from 1-deoxy-D-xylulose 5-phosphate: step 1/6. In terms of biological role, catalyzes the NADPH-dependent rearrangement and reduction of 1-deoxy-D-xylulose-5-phosphate (DXP) to 2-C-methyl-D-erythritol 4-phosphate (MEP). The polypeptide is 1-deoxy-D-xylulose 5-phosphate reductoisomerase (Acinetobacter baumannii (strain AB307-0294)).